A 293-amino-acid chain; its full sequence is Bifunctional protein FolD (293 aa).

NADP(+) contacts are provided by residues 166 to 168 (GRS), serine 191, and isoleucine 232.

It belongs to the tetrahydrofolate dehydrogenase/cyclohydrolase family. In terms of assembly, homodimer.

The catalysed reaction is (6R)-5,10-methylene-5,6,7,8-tetrahydrofolate + NADP(+) = (6R)-5,10-methenyltetrahydrofolate + NADPH. It catalyses the reaction (6R)-5,10-methenyltetrahydrofolate + H2O = (6R)-10-formyltetrahydrofolate + H(+). It functions in the pathway one-carbon metabolism; tetrahydrofolate interconversion. Functionally, catalyzes the oxidation of 5,10-methylenetetrahydrofolate to 5,10-methenyltetrahydrofolate and then the hydrolysis of 5,10-methenyltetrahydrofolate to 10-formyltetrahydrofolate. In Synechococcus sp. (strain JA-2-3B'a(2-13)) (Cyanobacteria bacterium Yellowstone B-Prime), this protein is Bifunctional protein FolD.